We begin with the raw amino-acid sequence, 433 residues long: MPLKKLKPVDPLKLYSALRDFGMPFMLRSAEKDSRKARFTYISAEPEFVVEVGEGTEIDGERVSDERNPLRALKGLMGERVEGRRFMGGFVGYVSYDSVHSIIGGKIEEPSVFGYYPWTFIYDHSTGALSFFYLREAPFDPEALVERARREESRLEDGGSEVISTDAGMEEFVEIVRAGKEYIYSGDVFQVVLSREYRVRTDLDALEIYKRLVELNPSPYTFILEFEKTVVGASPETMGSVEGRTFKINPIAGTAPRGRTGEEDRELEKALLSDEKERAEHVMLVDLARNDVRRVSKPGSVRLTRFFDVLKYSHVQHIESEVVGELDEGKNAFDAMEAAFPAGTLTGAPKIRAMEIIDELERSRRKVYGGAVGYFSLTGDADMAIAIRMAEIEGRKASVRAGAGIVADSVPEKEFFETENKMRAVLKALGVRE.

L-tryptophan is bound by residues S29 and 219 to 221; that span reads PYT. Position 253–254 (253–254) interacts with chorismate; sequence GT. A Mg(2+)-binding site is contributed by E280. Residues Y368, R388, 402-404, and G404 contribute to the chorismate site; that span reads GAG. E417 provides a ligand contact to Mg(2+).

This sequence belongs to the anthranilate synthase component I family. As to quaternary structure, heterotetramer consisting of two non-identical subunits: a beta subunit (TrpG) and a large alpha subunit (TrpE). Mg(2+) serves as cofactor.

It catalyses the reaction chorismate + L-glutamine = anthranilate + pyruvate + L-glutamate + H(+). The protein operates within amino-acid biosynthesis; L-tryptophan biosynthesis; L-tryptophan from chorismate: step 1/5. With respect to regulation, feedback inhibited by tryptophan. In terms of biological role, part of a heterotetrameric complex that catalyzes the two-step biosynthesis of anthranilate, an intermediate in the biosynthesis of L-tryptophan. In the first step, the glutamine-binding beta subunit (TrpG) of anthranilate synthase (AS) provides the glutamine amidotransferase activity which generates ammonia as a substrate that, along with chorismate, is used in the second step, catalyzed by the large alpha subunit of AS (TrpE) to produce anthranilate. In the absence of TrpG, TrpE can synthesize anthranilate directly from chorismate and high concentrations of ammonia. This chain is Anthranilate synthase component 1 (trpE), found in Thermococcus kodakarensis (strain ATCC BAA-918 / JCM 12380 / KOD1) (Pyrococcus kodakaraensis (strain KOD1)).